A 202-amino-acid chain; its full sequence is IPLPPHPGHPGYINFSYEVLTPLKWYQSMMRHEYPSYGYEPMGGWLHHQIIPVLSQQHSPSHSLPPQHHIPIMAAQQPAPPQQPVMPVPGQHPMAPTQHHQPNLPQPGQQPYQPQPAQQPQPHQPIQPIQPIQPIQPMQPMQPMQPMQPMQPMQPQTPVHAVRPLPPQPPLPPMFPMQPMSPMLPDMEAWPATDKTKREEVD.

Position 16 is a phosphoserine (Ser16). The tract at residues 77–202 (QPAPPQQPVM…TDKTKREEVD (126 aa)) is disordered. Over residues 78–87 (PAPPQQPVMP) the composition is skewed to pro residues. The span at 101 to 112 (QPNLPQPGQQPY) shows a compositional bias: low complexity. Residues 113-125 (QPQPAQQPQPHQP) show a composition bias toward pro residues. Residues 126 to 158 (IQPIQPIQPIQPMQPMQPMQPMQPMQPMQPQTP) are compositionally biased toward low complexity. The segment covering 164–176 (PLPPQPPLPPMFP) has biased composition (pro residues).

The protein belongs to the amelogenin family.

Its subcellular location is the secreted. The protein localises to the extracellular space. It localises to the extracellular matrix. Functionally, plays a role in the biomineralization of teeth. Seems to regulate the formation of crystallites during the secretory stage of tooth enamel development. Thought to play a major role in the structural organization and mineralization of developing enamel. The sequence is that of Amelogenin (AMEL) from Monodelphis domestica (Gray short-tailed opossum).